An 84-amino-acid polypeptide reads, in one-letter code: Conophysin-R (84 aa).

7 disulfide bridges follow: C6–C46, C9–C20, C14–C36, C21–C26, C53–C71, C65–C83, and C72–C77.

As to expression, expressed by the venom duct.

It is found in the secreted. In terms of biological role, targets vasopressin-oxytocin related receptors. No effect observed when injected into goldfish or into mice. This is Conophysin-R from Conus radiatus (Rayed cone).